We begin with the raw amino-acid sequence, 206 residues long: Large ribosomal subunit protein uL4 (206 aa).

A disordered region spans residues 45–76 (RQGNQSAKTRAEVSGGGKKPWRQKGTGRARQG).

It belongs to the universal ribosomal protein uL4 family. Part of the 50S ribosomal subunit.

One of the primary rRNA binding proteins, this protein initially binds near the 5'-end of the 23S rRNA. It is important during the early stages of 50S assembly. It makes multiple contacts with different domains of the 23S rRNA in the assembled 50S subunit and ribosome. Its function is as follows. Forms part of the polypeptide exit tunnel. The chain is Large ribosomal subunit protein uL4 from Clostridium novyi (strain NT).